Here is a 235-residue protein sequence, read N- to C-terminus: Phosphoribosylformylglycinamidine synthase subunit PurQ (235 aa).

Positions 5–235 (FGVVVFPGSN…LLNHVSIVAA (231 aa)) constitute a Glutamine amidotransferase type-1 domain. Residue Cys88 is the Nucleophile of the active site. Residues His205 and Glu207 contribute to the active site.

Part of the FGAM synthase complex composed of 1 PurL, 1 PurQ and 2 PurS subunits.

The protein resides in the cytoplasm. It carries out the reaction N(2)-formyl-N(1)-(5-phospho-beta-D-ribosyl)glycinamide + L-glutamine + ATP + H2O = 2-formamido-N(1)-(5-O-phospho-beta-D-ribosyl)acetamidine + L-glutamate + ADP + phosphate + H(+). The catalysed reaction is L-glutamine + H2O = L-glutamate + NH4(+). It functions in the pathway purine metabolism; IMP biosynthesis via de novo pathway; 5-amino-1-(5-phospho-D-ribosyl)imidazole from N(2)-formyl-N(1)-(5-phospho-D-ribosyl)glycinamide: step 1/2. Its function is as follows. Part of the phosphoribosylformylglycinamidine synthase complex involved in the purines biosynthetic pathway. Catalyzes the ATP-dependent conversion of formylglycinamide ribonucleotide (FGAR) and glutamine to yield formylglycinamidine ribonucleotide (FGAM) and glutamate. The FGAM synthase complex is composed of three subunits. PurQ produces an ammonia molecule by converting glutamine to glutamate. PurL transfers the ammonia molecule to FGAR to form FGAM in an ATP-dependent manner. PurS interacts with PurQ and PurL and is thought to assist in the transfer of the ammonia molecule from PurQ to PurL. This Salinibacter ruber (strain DSM 13855 / M31) protein is Phosphoribosylformylglycinamidine synthase subunit PurQ.